Consider the following 159-residue polypeptide: Ribosomal RNA large subunit methyltransferase H (159 aa).

Residues Leu76, Gly108, and 127-132 (FGRMTL) contribute to the S-adenosyl-L-methionine site.

The protein belongs to the RNA methyltransferase RlmH family. Homodimer.

The protein resides in the cytoplasm. It carries out the reaction pseudouridine(1915) in 23S rRNA + S-adenosyl-L-methionine = N(3)-methylpseudouridine(1915) in 23S rRNA + S-adenosyl-L-homocysteine + H(+). Functionally, specifically methylates the pseudouridine at position 1915 (m3Psi1915) in 23S rRNA. The polypeptide is Ribosomal RNA large subunit methyltransferase H (Lactococcus lactis subsp. cremoris (strain SK11)).